The sequence spans 240 residues: Probable transcriptional regulatory protein HP_0162 (240 aa).

Belongs to the TACO1 family.

The protein resides in the cytoplasm. This Helicobacter pylori (strain ATCC 700392 / 26695) (Campylobacter pylori) protein is Probable transcriptional regulatory protein HP_0162.